Here is a 208-residue protein sequence, read N- to C-terminus: NADH-ubiquinone oxidoreductase chain 4 (208 aa).

6 consecutive transmembrane segments (helical) span residues 23–43, 60–80, 93–113, 114–134, 147–167, and 185–205; these read VWIN…NLLW, PLSA…LLAS, KLYI…FSAN, ELIM…IIIT, IYFL…LIYI, and PINQ…AFMV.

Belongs to the complex I subunit 4 family. As to quaternary structure, core subunit of respiratory chain NADH dehydrogenase (Complex I) which is composed of 45 different subunits.

The protein localises to the mitochondrion inner membrane. It catalyses the reaction a ubiquinone + NADH + 5 H(+)(in) = a ubiquinol + NAD(+) + 4 H(+)(out). Its function is as follows. Core subunit of the mitochondrial membrane respiratory chain NADH dehydrogenase (Complex I) which catalyzes electron transfer from NADH through the respiratory chain, using ubiquinone as an electron acceptor. Essential for the catalytic activity and assembly of complex I. This Microtus pennsylvanicus (Meadow vole) protein is NADH-ubiquinone oxidoreductase chain 4 (MT-ND4).